A 452-amino-acid chain; its full sequence is RNA polymerase II-associated protein rba50 (452 aa).

Disordered regions lie at residues 60–83 (LRKNKESPGLEGKGNLDDQGIDEE), 125–202 (EREL…QTKR), and 223–261 (PIKGNEEDDASEDAKHSPKKHSPALSDGTTSNDGAPLEF). The span at 125–135 (ERELAQRKDRS) shows a compositional bias: basic and acidic residues. A compositionally biased stretch (polar residues) spans 136–154 (SQVNTPDLSQRPSDDSFLS). Basic and acidic residues predominate over residues 156–165 (EKLRSSEKLN). Low complexity predominate over residues 170–191 (SVLSSEAVDSSSGSPSPPMALS).

Belongs to the RPAP1 family. In terms of assembly, interacts with RNA polymerase II.

Its subcellular location is the cytoplasm. The protein localises to the nucleus. Forms an interface between the RNA polymerase II enzyme and chaperone/scaffolding proteins, suggesting that it is required to connect RNA polymerase II to regulators of protein complex formation. In Schizosaccharomyces pombe (strain 972 / ATCC 24843) (Fission yeast), this protein is RNA polymerase II-associated protein rba50 (rba50).